A 387-amino-acid polypeptide reads, in one-letter code: Cell surface GPI-anchored protein ARB_01627 (387 aa).

Positions 1–19 (MAITKYLVSALAVAGLAFA) are cleaved as a signal peptide. Residues Asn-73, Asn-175, Asn-201, Asn-206, Asn-231, Asn-236, Asn-253, and Asn-270 are each glycosylated (N-linked (GlcNAc...) asparagine). Residues 338–361 (TCRERQEKPKTGDDHSGGDEEGHK) show a composition bias toward basic and acidic residues. Residues 338 to 362 (TCRERQEKPKTGDDHSGGDEEGHKG) are disordered. Residue Ala-364 is the site of GPI-anchor amidated alanine attachment. Residues 365 to 387 (AAFAKAPAAALLIAFVGALQFFL) constitute a propeptide, removed in mature form.

Belongs to the SPS2 family. The GPI-anchor is attached to the protein in the endoplasmic reticulum and serves to target the protein to the cell surface. There, the glucosamine-inositol phospholipid moiety is cleaved off and the GPI-modified mannoprotein is covalently attached via its lipidless GPI glycan remnant to the 1,6-beta-glucan of the outer cell wall layer.

It is found in the cell membrane. The protein localises to the secreted. The protein resides in the cell wall. In terms of biological role, required for proper cell wall integrity and for the correct assembly of the mannoprotein outer layer of the cell wall. The sequence is that of Cell surface GPI-anchored protein ARB_01627 from Arthroderma benhamiae (strain ATCC MYA-4681 / CBS 112371) (Trichophyton mentagrophytes).